A 126-amino-acid polypeptide reads, in one-letter code: MAIRIVGVDLPQNKRGEIALTYVYGIGRSSSAKILDKAGVDRDVKVKDWTDDQAAKIREIIGAEYKVEGDLRSEVQLNIKRLMDIGCYRGVRHRIGLPVRGQSTKNNARTRKGRKKTVANKKKATK.

The tract at residues 98–126 (PVRGQSTKNNARTRKGRKKTVANKKKATK) is disordered. Residues 108–126 (ARTRKGRKKTVANKKKATK) show a composition bias toward basic residues.

Belongs to the universal ribosomal protein uS13 family. In terms of assembly, part of the 30S ribosomal subunit. Forms a loose heterodimer with protein S19. Forms two bridges to the 50S subunit in the 70S ribosome.

Its function is as follows. Located at the top of the head of the 30S subunit, it contacts several helices of the 16S rRNA. In the 70S ribosome it contacts the 23S rRNA (bridge B1a) and protein L5 of the 50S subunit (bridge B1b), connecting the 2 subunits; these bridges are implicated in subunit movement. Contacts the tRNAs in the A and P-sites. In Phocaeicola vulgatus (strain ATCC 8482 / DSM 1447 / JCM 5826 / CCUG 4940 / NBRC 14291 / NCTC 11154) (Bacteroides vulgatus), this protein is Small ribosomal subunit protein uS13.